A 628-amino-acid chain; its full sequence is tRNA uridine 5-carboxymethylaminomethyl modification enzyme MnmG (628 aa).

FAD contacts are provided by residues 14 to 19 (GAGHAG), Val126, and Ser181. Residue 273 to 287 (GPRYCPSIEDKVVRF) coordinates NAD(+). Position 370 (Gln370) interacts with FAD.

Belongs to the MnmG family. Homodimer. Heterotetramer of two MnmE and two MnmG subunits. Requires FAD as cofactor.

The protein resides in the cytoplasm. Its function is as follows. NAD-binding protein involved in the addition of a carboxymethylaminomethyl (cmnm) group at the wobble position (U34) of certain tRNAs, forming tRNA-cmnm(5)s(2)U34. This chain is tRNA uridine 5-carboxymethylaminomethyl modification enzyme MnmG, found in Exiguobacterium sibiricum (strain DSM 17290 / CCUG 55495 / CIP 109462 / JCM 13490 / 255-15).